The following is a 342-amino-acid chain: Phosphate acyltransferase (342 aa).

This sequence belongs to the PlsX family. As to quaternary structure, homodimer. Probably interacts with PlsY.

It localises to the cytoplasm. It catalyses the reaction a fatty acyl-[ACP] + phosphate = an acyl phosphate + holo-[ACP]. Its pathway is lipid metabolism; phospholipid metabolism. Catalyzes the reversible formation of acyl-phosphate (acyl-PO(4)) from acyl-[acyl-carrier-protein] (acyl-ACP). This enzyme utilizes acyl-ACP as fatty acyl donor, but not acyl-CoA. This chain is Phosphate acyltransferase, found in Shewanella sp. (strain ANA-3).